The following is a 169-amino-acid chain: MEMLQGLLLWMLLSVGGVWASRGPLRPLCRPINATLAAEKEACPICITFTTSICAGYCPSMVRVMPAALPPIPQPVCTYRELRFASIRLPGCPPGVDPMVSFPVALSCHCGPCRLKTTDCGGPRDHPLACAPQASSSSKDPPSQPLTSTSTPTPGASNRSSHPLPIKTS.

The first 20 residues, 1 to 20 (MEMLQGLLLWMLLSVGGVWA), serve as a signal peptide directing secretion. 6 disulfide bridges follow: C29/C77, C43/C92, C46/C130, C54/C108, C58/C110, and C113/C120. The N-linked (GlcNAc...) asparagine glycan is linked to N33. The disordered stretch occupies residues 131–169 (APQASSSSKDPPSQPLTSTSTPTPGASNRSSHPLPIKTS). Over residues 145 to 154 (PLTSTSTPTP) the composition is skewed to low complexity. Polar residues predominate over residues 155 to 169 (GASNRSSHPLPIKTS). Residue N158 is glycosylated (N-linked (GlcNAc...) asparagine).

The protein belongs to the glycoprotein hormones subunit beta family. As to quaternary structure, heterodimer of a common alpha chain and a unique beta chain which confers biological specificity to thyrotropin, lutropin, follitropin and gonadotropin.

The protein resides in the secreted. In terms of biological role, promotes spermatogenesis and ovulation by stimulating the testes and ovaries to synthesize steroids. This is Lutropin/choriogonadotropin subunit beta (LHB) from Equus quagga burchellii (Burchell's zebra).